The sequence spans 389 residues: Na(+)/H(+) antiporter NhaA 1 (389 aa).

The next 11 membrane-spanning stretches (helical) occupy residues 12 to 32, 62 to 82, 97 to 117, 128 to 148, 157 to 177, 184 to 204, 220 to 240, 260 to 280, 282 to 302, 331 to 351, and 365 to 385; these read VLNE…ALLV, FLLW…GLEL, IVLP…LFAL, GWAI…MMCG, IFLL…IAIF, IVAF…NLLG, ISVL…AFFI, FWIA…VNLS, IDIG…LFVG, LYGV…IDGL, and LAIL…LKFF.

It belongs to the NhaA Na(+)/H(+) (TC 2.A.33) antiporter family.

The protein resides in the cell inner membrane. The catalysed reaction is Na(+)(in) + 2 H(+)(out) = Na(+)(out) + 2 H(+)(in). Its function is as follows. Na(+)/H(+) antiporter that extrudes sodium in exchange for external protons. The sequence is that of Na(+)/H(+) antiporter NhaA 1 from Campylobacter jejuni (strain RM1221).